We begin with the raw amino-acid sequence, 482 residues long: UDP-sulfoquinovose synthase, chloroplastic (482 aa).

The transit peptide at 1 to 61 directs the protein to the chloroplast; sequence MAHLLSTSCS…NNTQKLTVVR (61 aa). NAD(+) is bound by residues 100-101, 120-124, 163-164, Arg-189, and Asn-207; these read YC, DNLVR, and DI. A substrate-binding site is contributed by Arg-189. Substrate contacts are provided by Thr-233 and Tyr-270. Thr-233 is an active-site residue. 2 residues coordinate NAD(+): Tyr-270 and Lys-274. Tyr-270 functions as the Proton acceptor in the catalytic mechanism. Lys-274 is an active-site residue. Substrate is bound at residue Gln-297. Residue Val-300 participates in NAD(+) binding. Substrate-binding positions include 327 to 330, 342 to 344, and 415 to 417; these read ALNR, TVY, and RVE.

It belongs to the NAD(P)-dependent epimerase/dehydratase family. As to quaternary structure, homodimer. Interacts with FdGOGAT (via FMN-binding domain). NAD(+) is required as a cofactor. In terms of processing, the N-terminus is blocked.

The protein localises to the plastid. It is found in the chloroplast stroma. It catalyses the reaction sulfite + UDP-alpha-D-glucose + H(+) = UDP-alpha-D-6-sulfoquinovose + H2O. Its function is as follows. Involved in the biosynthesis of sulfolipids found in thylakoid membranes. Converts UDP-glucose and sulfite to the sulfolipid head group precursor UDP-sulfoquinovose. The sulfite is delivered to the reaction center by the FMN-binding domain of FdGOGAT. The polypeptide is UDP-sulfoquinovose synthase, chloroplastic (SQD1) (Spinacia oleracea (Spinach)).